The sequence spans 385 residues: Sesquiterpene alcohol synthase (385 aa).

Residues D123 and D127 each contribute to the Mg(2+) site. A DDXXD motif motif is present at residues 123 to 127 (DDISD).

It belongs to the terpene synthase family. It depends on Mg(2+) as a cofactor. In terms of tissue distribution, specifically expressed in tissues lining the cuticle of the abdominal sternites of mature males.

The catalysed reaction is (2E,6E)-farnesyl diphosphate + H2O = (1S,6S,7R)-sesquipiperitol + diphosphate. Its pathway is pheromone biosynthesis. Its function is as follows. Sesquiterpene alcohol synthase that catalyzes the formation of (1S,6S,7R)-sesquipiperitol, a terpene intermediate in murgantiol biosynthesis, a male-released aggregation pheromone. The polypeptide is Sesquiterpene alcohol synthase (Murgantia histrionica (Harlequin bug)).